Reading from the N-terminus, the 203-residue chain is RNA chaperone ProQ (203 aa).

The tract at residues 111–138 (KAKRQALAPKKPAKKVAPKRAPAVKKER) is disordered.

Belongs to the ProQ family.

Its subcellular location is the cytoplasm. RNA chaperone with significant RNA binding, RNA strand exchange and RNA duplexing activities. The polypeptide is RNA chaperone ProQ (Shewanella frigidimarina (strain NCIMB 400)).